The primary structure comprises 563 residues: Developmental regulatory protein wetA (563 aa).

Polar residues-rich tracts occupy residues 54-69 (EQSP…THPS) and 160-175 (HKQS…SQFQ). 6 disordered regions span residues 54-81 (EQSP…SLPP), 112-176 (ASST…QFQK), 272-318 (SNNS…PDLQ), 334-356 (PQRQ…IQNT), 430-494 (PQLH…SPKG), and 516-538 (GVAP…DRRR). Residues 272–305 (SNNSTVTSSPPSADDIFPSPHSSDPQSMSSWHSD) show a composition bias toward low complexity. The segment covering 430–441 (PQLHPQSRSPSL) has biased composition (polar residues).

It belongs to the wetA family.

In terms of biological role, brlA, abaA and wetA are pivotal regulators of conidiophore development and conidium maturation. They act individually and together to regulate their own expression and that of numerous other sporulation-specific genes. This Aspergillus oryzae (strain ATCC 42149 / RIB 40) (Yellow koji mold) protein is Developmental regulatory protein wetA.